A 388-amino-acid chain; its full sequence is UDP-N-acetylglucosamine--N-acetylmuramyl-(pentapeptide) pyrophosphoryl-undecaprenol N-acetylglucosamine transferase (388 aa).

Residues 42–44 (TGG), asparagine 159, arginine 195, serine 223, isoleucine 277, and glutamine 322 each bind UDP-N-acetyl-alpha-D-glucosamine.

It belongs to the glycosyltransferase 28 family. MurG subfamily.

It localises to the cell inner membrane. The catalysed reaction is di-trans,octa-cis-undecaprenyl diphospho-N-acetyl-alpha-D-muramoyl-L-alanyl-D-glutamyl-meso-2,6-diaminopimeloyl-D-alanyl-D-alanine + UDP-N-acetyl-alpha-D-glucosamine = di-trans,octa-cis-undecaprenyl diphospho-[N-acetyl-alpha-D-glucosaminyl-(1-&gt;4)]-N-acetyl-alpha-D-muramoyl-L-alanyl-D-glutamyl-meso-2,6-diaminopimeloyl-D-alanyl-D-alanine + UDP + H(+). It functions in the pathway cell wall biogenesis; peptidoglycan biosynthesis. Its function is as follows. Cell wall formation. Catalyzes the transfer of a GlcNAc subunit on undecaprenyl-pyrophosphoryl-MurNAc-pentapeptide (lipid intermediate I) to form undecaprenyl-pyrophosphoryl-MurNAc-(pentapeptide)GlcNAc (lipid intermediate II). This chain is UDP-N-acetylglucosamine--N-acetylmuramyl-(pentapeptide) pyrophosphoryl-undecaprenol N-acetylglucosamine transferase, found in Albidiferax ferrireducens (strain ATCC BAA-621 / DSM 15236 / T118) (Rhodoferax ferrireducens).